Consider the following 596-residue polypeptide: Cysteine--tRNA ligase (596 aa).

A unknown region spans residues 1–199 (MKSKTFLEKN…SQRYFEELRK (199 aa)). Cys212 is a Zn(2+) binding site. The 'HIGH' region motif lies at 214–224 (PTVYDEVHIGN). Cys377, His403, and Glu407 together coordinate Zn(2+). A 'KMSKS' region motif is present at residues 435 to 439 (KMSKS). Lys438 contacts ATP.

The protein belongs to the class-I aminoacyl-tRNA synthetase family. In terms of assembly, monomer. It depends on Zn(2+) as a cofactor.

Its subcellular location is the cytoplasm. The catalysed reaction is tRNA(Cys) + L-cysteine + ATP = L-cysteinyl-tRNA(Cys) + AMP + diphosphate. This Mycoplasmopsis pulmonis (strain UAB CTIP) (Mycoplasma pulmonis) protein is Cysteine--tRNA ligase (cysS).